Here is a 707-residue protein sequence, read N- to C-terminus: Polyribonucleotide nucleotidyltransferase (707 aa).

Mg(2+) contacts are provided by Asp-486 and Asp-492. In terms of domain architecture, KH spans 553-612 (PTVTTLRVLPDKIPIIIGPAGKNIKKIIEETKVKIDLDPEGLVKIYATSKEAAEKAVSMI). One can recognise an S1 motif domain in the interval 622–690 (GEVYMGKVTR…DQGRIKVSLK (69 aa)).

It belongs to the polyribonucleotide nucleotidyltransferase family. Mg(2+) serves as cofactor.

It is found in the cytoplasm. It catalyses the reaction RNA(n+1) + phosphate = RNA(n) + a ribonucleoside 5'-diphosphate. In terms of biological role, involved in mRNA degradation. Catalyzes the phosphorolysis of single-stranded polyribonucleotides processively in the 3'- to 5'-direction. This is Polyribonucleotide nucleotidyltransferase from Sulfurihydrogenibium azorense (strain DSM 15241 / OCM 825 / Az-Fu1).